The sequence spans 721 residues: 1,4-alpha-glucan branching enzyme GlgB (721 aa).

Asp400 (nucleophile) is an active-site residue. Glu453 (proton donor) is an active-site residue.

This sequence belongs to the glycosyl hydrolase 13 family. GlgB subfamily. In terms of assembly, monomer.

It carries out the reaction Transfers a segment of a (1-&gt;4)-alpha-D-glucan chain to a primary hydroxy group in a similar glucan chain.. It participates in glycan biosynthesis; glycogen biosynthesis. Its function is as follows. Catalyzes the formation of the alpha-1,6-glucosidic linkages in glycogen by scission of a 1,4-alpha-linked oligosaccharide from growing alpha-1,4-glucan chains and the subsequent attachment of the oligosaccharide to the alpha-1,6 position. This chain is 1,4-alpha-glucan branching enzyme GlgB, found in Chlamydia felis (strain Fe/C-56) (Chlamydophila felis).